The chain runs to 564 residues: Interactor of constitutive active ROPs 3 (564 aa).

Disordered stretches follow at residues 1–73 (MQTQ…SRIT) and 88–135 (KAKD…SALE). Positions 33–44 (ESSSSPISATNR) are enriched in polar residues. Composition is skewed to basic and acidic residues over residues 63 to 73 (VSEKKRPSRIT) and 98 to 123 (TSKKQAEQEAEESRKQLQEVSSKLEE). Coiled-coil stretches lie at residues 70–133 (SRIT…ETSA) and 231–514 (AETE…AATA). At Ser-533 the chain carries Phosphoserine.

Belongs to the ICR family. Interacts with ARAC11 in vitro. As to expression, expressed in flowers.

Functionally, acts as a scaffold, mediating interaction of ROPs with different proteins. The polypeptide is Interactor of constitutive active ROPs 3 (ICR3) (Arabidopsis thaliana (Mouse-ear cress)).